Reading from the N-terminus, the 401-residue chain is S-adenosylmethionine synthase (401 aa).

ATP is bound at residue 135–140; the sequence is GHGSGD.

This sequence belongs to the AdoMet synthase 2 family. Requires Mg(2+) as cofactor.

The enzyme catalyses L-methionine + ATP + H2O = S-adenosyl-L-methionine + phosphate + diphosphate. The protein operates within amino-acid biosynthesis; S-adenosyl-L-methionine biosynthesis; S-adenosyl-L-methionine from L-methionine: step 1/1. Catalyzes the formation of S-adenosylmethionine from methionine and ATP. This chain is S-adenosylmethionine synthase, found in Methanobrevibacter smithii (strain ATCC 35061 / DSM 861 / OCM 144 / PS).